The following is a 51-amino-acid chain: Ribosome biogenesis protein Nop10 (51 aa).

The protein belongs to the NOP10 family.

Functionally, involved in ribosome biogenesis; more specifically in 18S rRNA pseudouridylation and in cleavage of pre-rRNA. This Methanococcus aeolicus (strain ATCC BAA-1280 / DSM 17508 / OCM 812 / Nankai-3) protein is Ribosome biogenesis protein Nop10.